A 361-amino-acid chain; its full sequence is Phospho-N-acetylmuramoyl-pentapeptide-transferase (361 aa).

Transmembrane regions (helical) follow at residues 25-45 (TGGA…WIID), 72-92 (TPTM…VLWA), 95-115 (LNPY…VGFY), 135-155 (LLIE…LGRG), 169-189 (VVLN…VGAG), 200-220 (GLAI…SYLV), 240-260 (LAVL…FNAP), 264-284 (IFMG…IAVA), 289-309 (IVLA…IVQV), and 338-358 (QIVI…LSTL).

Belongs to the glycosyltransferase 4 family. MraY subfamily. Mg(2+) serves as cofactor.

It is found in the cell inner membrane. The catalysed reaction is UDP-N-acetyl-alpha-D-muramoyl-L-alanyl-gamma-D-glutamyl-meso-2,6-diaminopimeloyl-D-alanyl-D-alanine + di-trans,octa-cis-undecaprenyl phosphate = di-trans,octa-cis-undecaprenyl diphospho-N-acetyl-alpha-D-muramoyl-L-alanyl-D-glutamyl-meso-2,6-diaminopimeloyl-D-alanyl-D-alanine + UMP. The protein operates within cell wall biogenesis; peptidoglycan biosynthesis. Its function is as follows. Catalyzes the initial step of the lipid cycle reactions in the biosynthesis of the cell wall peptidoglycan: transfers peptidoglycan precursor phospho-MurNAc-pentapeptide from UDP-MurNAc-pentapeptide onto the lipid carrier undecaprenyl phosphate, yielding undecaprenyl-pyrophosphoryl-MurNAc-pentapeptide, known as lipid I. This chain is Phospho-N-acetylmuramoyl-pentapeptide-transferase, found in Rhodopseudomonas palustris (strain HaA2).